Here is a 1184-residue protein sequence, read N- to C-terminus: DNA polymerase III subunit alpha (1184 aa).

The protein belongs to the DNA polymerase type-C family. DnaE subfamily. The Pol III holoenzyme complex contains at least 10 different subunits organized into 3 functionally essential subassemblies: the Pol III core, the beta sliding clamp processivity factor and the clamp-loading complex. The Pol III core (subunits alpha, epsilon and theta) contains the polymerase and the 3'-5' exonuclease proofreading activities. The polymerase is tethered to the template via the dimeric beta sliding clamp processivity factor. The clamp loader (also called gamma complex) assembles the beta sliding clamp onto the primed template and plays a central role in the organization and communication at the replication fork. The clamp-loading complex contains delta, delta', psi and chi, and 3 copies of either or both of two different DnaX proteins, gamma and tau. The DNA replisome complex has a single clamp loader (3 tau and 1 each of delta, delta', psi and chi subunits) which binds 3 Pol III cores (1 core on the leading strand and 2 on the lagging strand) each with a beta sliding clamp dimer. Interacts with the beta-sliding clamp (DnaN). Co-immunoprecipitates with DarG in the presence and absence of darT.

It localises to the cytoplasm. It catalyses the reaction DNA(n) + a 2'-deoxyribonucleoside 5'-triphosphate = DNA(n+1) + diphosphate. Its function is as follows. DNA polymerase III is a complex, multichain enzyme responsible for most of the replicative synthesis in bacteria. Pol III also exhibits 3' to 5' exonuclease activity. The alpha chain is the DNA polymerase. This Mycobacterium tuberculosis (strain ATCC 25618 / H37Rv) protein is DNA polymerase III subunit alpha (dnaE1).